Reading from the N-terminus, the 1013-residue chain is GPI ethanolamine phosphate transferase 3 (1013 aa).

The helical transmembrane segment at 41–61 (TLYIFLYSALAALQFIAIAFF) threads the bilayer. N-linked (GlcNAc...) asparagine glycans are attached at residues N184, N205, N336, N399, and N423. 3 helical membrane passes run 447–467 (YYSIGTGIILLIISLAMLITI), 484–504 (VPTIIVMPLVSNVCFLGVFYV), and 515–535 (LWASLLATAVGIIIGFYVPIF). N539 carries an N-linked (GlcNAc...) asparagine glycan. Helical transmembrane passes span 558–578 (VAAFLITLHALIFTSNSFTIW), 582–602 (IVSFSLTTLGMLTLYEFVFLP), 643–663 (IVGGYHSIVLIVCTRLASLIT), and 682–702 (NYSFSVMLGCLFLVFATPACI). Residue N707 is glycosylated (N-linked (GlcNAc...) asparagine). The helical transmembrane segment at 715–735 (AAPIWIGMLMKSILFVNFIYW) threads the bilayer. N-linked (GlcNAc...) asparagine glycans are attached at residues N742, N750, and N755. Transmembrane regions (helical) follow at residues 761 to 781 (IVVGVSLVAANIGWMMGPLCI), 802 to 822 (NAYGAQYFLLVINFFMCILLF), 825 to 845 (PLAQLSLFLMCNQLLSILEIF), 868 to 888 (FFSTGHQATIPAVQWDMGFIL), 899 to 919 (LGIVLNTFGPHILCGISVALL), 943 to 963 (GMLLIYQTVLCLSTFIWVTNF), and 977 to 997 (FMFAALSLIVTQLVLTFITIA).

Belongs to the PIGG/PIGN/PIGO family. PIGO subfamily.

It is found in the endoplasmic reticulum membrane. Its pathway is glycolipid biosynthesis; glycosylphosphatidylinositol-anchor biosynthesis. Its function is as follows. Involved in glycosylphosphatidylinositol-anchor biosynthesis. Transfers ethanolamine phosphate to the GPI third mannose which links the GPI-anchor to the C-terminus of the proteins by an amide bond. Involved in cell wall biosynthesis. In Eremothecium gossypii (strain ATCC 10895 / CBS 109.51 / FGSC 9923 / NRRL Y-1056) (Yeast), this protein is GPI ethanolamine phosphate transferase 3 (GPI13).